The following is a 335-amino-acid chain: UPF0065 protein BB4329 (335 aa).

The N-terminal stretch at 1–39 (MNKNIPAFHRRCHGLVQGLARTLLLAPVLLALSVPAAQA) is a signal peptide.

The protein belongs to the UPF0065 (bug) family.

The protein localises to the periplasm. This is UPF0065 protein BB4329 from Bordetella bronchiseptica (strain ATCC BAA-588 / NCTC 13252 / RB50) (Alcaligenes bronchisepticus).